We begin with the raw amino-acid sequence, 422 residues long: F-box/kelch-repeat protein At3g27150 (422 aa).

The region spanning 68–114 is the F-box domain; sequence LLNVPQLVYELEVEILARVPRFEYWKLKLLNKGFSRLLKSDEIFKVR. Kelch repeat units lie at residues 162 to 212, 213 to 264, 266 to 312, 314 to 361, and 366 to 412; these read ESLC…TCGT, VVFV…YLRG, FYVL…SPPL, AVVG…VAFK, and KLLV…RFNH.

The sequence is that of F-box/kelch-repeat protein At3g27150 from Arabidopsis thaliana (Mouse-ear cress).